Here is a 363-residue protein sequence, read N- to C-terminus: 3-dehydroquinate synthase (363 aa).

NAD(+)-binding positions include 75-80 (DAEEGK), 109-113 (GAVTD), 133-134 (TS), K146, K155, and 173-176 (TLST). E188, H251, and H267 together coordinate Zn(2+).

Belongs to the sugar phosphate cyclases superfamily. Dehydroquinate synthase family. The cofactor is Co(2+). Requires Zn(2+) as cofactor. NAD(+) serves as cofactor.

It is found in the cytoplasm. It carries out the reaction 7-phospho-2-dehydro-3-deoxy-D-arabino-heptonate = 3-dehydroquinate + phosphate. It functions in the pathway metabolic intermediate biosynthesis; chorismate biosynthesis; chorismate from D-erythrose 4-phosphate and phosphoenolpyruvate: step 2/7. Catalyzes the conversion of 3-deoxy-D-arabino-heptulosonate 7-phosphate (DAHP) to dehydroquinate (DHQ). The sequence is that of 3-dehydroquinate synthase from Arthrobacter sp. (strain FB24).